A 75-amino-acid polypeptide reads, in one-letter code: Small ribosomal subunit protein bS18 (75 aa).

This sequence belongs to the bacterial ribosomal protein bS18 family. As to quaternary structure, part of the 30S ribosomal subunit. Forms a tight heterodimer with protein bS6.

Binds as a heterodimer with protein bS6 to the central domain of the 16S rRNA, where it helps stabilize the platform of the 30S subunit. This Roseobacter denitrificans (strain ATCC 33942 / OCh 114) (Erythrobacter sp. (strain OCh 114)) protein is Small ribosomal subunit protein bS18.